A 298-amino-acid chain; its full sequence is MIVNIKEDSIMELRDLQIFQSVADQGSVSSAAKELNYVQSNVTARIKQLENELKTPLFYRHKRGMTLTAEGRKMLVYVHKILQDVDELKQVFLDSETPSGILKIGTVETVSTLPTILSSYYKSYPNVDLSLQAGLTEELIREVLDHQLDGAFISGPIKHPLIEQYDVSTEKLMLVTQNKAFHIEEFTTTPLLVFNQGCGYRSKLERWLKDEGLLPKRIMEFNILETILNSVALGLGITLVPQSAVHHLSKAGKVHCHAIPEKYGSISTVFIRRKDSYMTNSMRSFLKTIEEHHHINML.

In terms of domain architecture, HTH lysR-type spans 11-68; it reads MELRDLQIFQSVADQGSVSSAAKELNYVQSNVTARIKQLENELKTPLFYRHKRGMTLT. The segment at residues 28–47 is a DNA-binding region (H-T-H motif); sequence VSSAAKELNYVQSNVTARIK.

Belongs to the LysR transcriptional regulatory family.

This is HTH-type transcriptional regulator CzcR (czcR) from Bacillus thuringiensis (strain Al Hakam).